A 539-amino-acid polypeptide reads, in one-letter code: Chaperonin GroEL (539 aa).

Residues 30–33 (TLGP), 87–91 (DGTTT), Gly-414, 479–481 (DAL), and Asp-495 each bind ATP.

The protein belongs to the chaperonin (HSP60) family. Forms a cylinder of 14 subunits composed of two heptameric rings stacked back-to-back. Interacts with the co-chaperonin GroES.

Its subcellular location is the cytoplasm. It catalyses the reaction ATP + H2O + a folded polypeptide = ADP + phosphate + an unfolded polypeptide.. Together with its co-chaperonin GroES, plays an essential role in assisting protein folding. The GroEL-GroES system forms a nano-cage that allows encapsulation of the non-native substrate proteins and provides a physical environment optimized to promote and accelerate protein folding. The polypeptide is Chaperonin GroEL (Caldicellulosiruptor bescii (strain ATCC BAA-1888 / DSM 6725 / KCTC 15123 / Z-1320) (Anaerocellum thermophilum)).